Here is a 315-residue protein sequence, read N- to C-terminus: GTP cyclohydrolase MptA (315 aa).

It belongs to the GTP cyclohydrolase IV family. In terms of assembly, homodimer. It depends on Fe(2+) as a cofactor.

The enzyme catalyses GTP + H2O = 7,8-dihydroneopterin 2',3'-cyclic phosphate + formate + diphosphate + H(+). It participates in cofactor biosynthesis; 5,6,7,8-tetrahydromethanopterin biosynthesis. In terms of biological role, converts GTP to 7,8-dihydro-D-neopterin 2',3'-cyclic phosphate, the first intermediate in the biosynthesis of coenzyme methanopterin. In Methanococcus maripaludis (strain C6 / ATCC BAA-1332), this protein is GTP cyclohydrolase MptA.